Reading from the N-terminus, the 273-residue chain is Large ribosomal subunit protein uL2 (273 aa).

Residues 224–260 (AMNPVDHPHGGGEGKTSGGRHPVTPWGKKTKGKKTRK) are disordered. Positions 251–260 (KKTKGKKTRK) are enriched in basic residues.

It belongs to the universal ribosomal protein uL2 family. Part of the 50S ribosomal subunit. Forms a bridge to the 30S subunit in the 70S ribosome.

Functionally, one of the primary rRNA binding proteins. Required for association of the 30S and 50S subunits to form the 70S ribosome, for tRNA binding and peptide bond formation. It has been suggested to have peptidyltransferase activity; this is somewhat controversial. Makes several contacts with the 16S rRNA in the 70S ribosome. This Orientia tsutsugamushi (strain Ikeda) (Rickettsia tsutsugamushi) protein is Large ribosomal subunit protein uL2.